Reading from the N-terminus, the 421-residue chain is ATP-dependent RNA helicase RhlB (421 aa).

The Q motif motif lies at 9–37 (QKFSDFALHPAVIEALEKKGFHNCTPIQA). A Helicase ATP-binding domain is found at 40 to 219 (LPLTLEGRDV…FEQMNNAEYV (180 aa)). An ATP-binding site is contributed by 53–60 (AQTGTGKT). The short motif at 165-168 (DEAD) is the DEAD box element. In terms of domain architecture, Helicase C-terminal spans 245 to 390 (RLLQTLLEEE…VSKYNPDALM (146 aa)). Residues 396-421 (PLRLTRARPGNGPRRNGPPRNRRRSG) form a disordered region. The span at 403–414 (RPGNGPRRNGPP) shows a compositional bias: low complexity.

This sequence belongs to the DEAD box helicase family. RhlB subfamily. In terms of assembly, component of the RNA degradosome, which is a multiprotein complex involved in RNA processing and mRNA degradation.

It is found in the cytoplasm. It carries out the reaction ATP + H2O = ADP + phosphate + H(+). In terms of biological role, DEAD-box RNA helicase involved in RNA degradation. Has RNA-dependent ATPase activity and unwinds double-stranded RNA. In Klebsiella pneumoniae (strain 342), this protein is ATP-dependent RNA helicase RhlB.